The primary structure comprises 139 residues: Acidic phospholipase A2 Tgc-E6 (139 aa).

The N-terminal stretch at 1–16 is a signal peptide; the sequence is MRTLWIMAVLLLGVEG. Disulfide bonds link Cys-42/Cys-132, Cys-44/Cys-60, Cys-59/Cys-111, Cys-65/Cys-139, Cys-66/Cys-104, Cys-73/Cys-97, and Cys-91/Cys-102. Ca(2+)-binding residues include Tyr-43, Gly-45, and Gly-47. His-63 is an active-site residue. Asp-64 lines the Ca(2+) pocket. Residue Asp-105 is part of the active site.

It belongs to the phospholipase A2 family. Group II subfamily. D49 sub-subfamily. As to quaternary structure, monomer. The cofactor is Ca(2+). As to expression, expressed by the venom gland.

It is found in the secreted. The enzyme catalyses a 1,2-diacyl-sn-glycero-3-phosphocholine + H2O = a 1-acyl-sn-glycero-3-phosphocholine + a fatty acid + H(+). Snake venom phospholipase A2 (PLA2) that inhibits the ADP-(IC(50)=272 nM) and collagen-induced (IC(50)=518 nM) human platelet aggregation in platelet rich plasma. Exhibits very high hydrolytic activities toward the synthetic lecithin, and prefers the anionic micelles (dPPC with deoxycholate) to the zwitterionic micelles (dPPC with Triton X-100). PLA2 catalyzes the calcium-dependent hydrolysis of the 2-acyl groups in 3-sn-phosphoglycerides. This Trimeresurus gracilis (Kikuchi habu) protein is Acidic phospholipase A2 Tgc-E6.